Reading from the N-terminus, the 594-residue chain is UvrABC system protein C (594 aa).

The GIY-YIG domain maps to 14 to 91 (DQPGCYLMKD…IKKHDPKYNI (78 aa)). The UVR domain maps to 196–231 (KEVRSELETKMYEASEKLEFERAKELRDQIAHIDAI).

It belongs to the UvrC family. In terms of assembly, interacts with UvrB in an incision complex.

Its subcellular location is the cytoplasm. The UvrABC repair system catalyzes the recognition and processing of DNA lesions. UvrC both incises the 5' and 3' sides of the lesion. The N-terminal half is responsible for the 3' incision and the C-terminal half is responsible for the 5' incision. The protein is UvrABC system protein C of Bacillus cereus (strain Q1).